Reading from the N-terminus, the 241-residue chain is Probable xyloglucan-specific endo-beta-1,4-glucanase A (241 aa).

Residues 1–18 (MKFNLALALSLTVATAEA) form the signal peptide.

It belongs to the glycosyl hydrolase 12 (cellulase H) family.

The protein resides in the secreted. The catalysed reaction is xyloglucan + H2O = xyloglucan oligosaccharides.. Its function is as follows. Catalyzes endohydrolysis of 1,4-beta-D-glucosidic linkages in xyloglucan with retention of the beta-configuration of the glycosyl residues. Specific for xyloglucan and does not hydrolyze other cell wall components. The polypeptide is Probable xyloglucan-specific endo-beta-1,4-glucanase A (xgeA) (Aspergillus clavatus (strain ATCC 1007 / CBS 513.65 / DSM 816 / NCTC 3887 / NRRL 1 / QM 1276 / 107)).